We begin with the raw amino-acid sequence, 348 residues long: Putative 4-hydroxythreonine-4-phosphate dehydrogenase 2 (348 aa).

A divalent metal cation-binding residues include histidine 180, histidine 224, and histidine 279.

It belongs to the PdxA family. Homodimer. Requires Zn(2+) as cofactor. It depends on Mg(2+) as a cofactor. The cofactor is Co(2+).

It localises to the cytoplasm. The catalysed reaction is 4-(phosphooxy)-L-threonine + NAD(+) = 3-amino-2-oxopropyl phosphate + CO2 + NADH. It participates in cofactor biosynthesis; pyridoxine 5'-phosphate biosynthesis; pyridoxine 5'-phosphate from D-erythrose 4-phosphate: step 4/5. Functionally, catalyzes the NAD(P)-dependent oxidation of 4-(phosphooxy)-L-threonine (HTP) into 2-amino-3-oxo-4-(phosphooxy)butyric acid which spontaneously decarboxylates to form 3-amino-2-oxopropyl phosphate (AHAP). This is Putative 4-hydroxythreonine-4-phosphate dehydrogenase 2 from Rhizobium meliloti (strain 1021) (Ensifer meliloti).